Consider the following 230-residue polypeptide: Sugar fermentation stimulation protein homolog (230 aa).

This sequence belongs to the SfsA family.

This chain is Sugar fermentation stimulation protein homolog, found in Clostridium perfringens (strain 13 / Type A).